We begin with the raw amino-acid sequence, 621 residues long: Chaperone protein HscA homolog (621 aa).

The protein belongs to the heat shock protein 70 family.

Its function is as follows. Chaperone involved in the maturation of iron-sulfur cluster-containing proteins. Has a low intrinsic ATPase activity which is markedly stimulated by HscB. The sequence is that of Chaperone protein HscA homolog from Acidithiobacillus ferrooxidans (strain ATCC 23270 / DSM 14882 / CIP 104768 / NCIMB 8455) (Ferrobacillus ferrooxidans (strain ATCC 23270)).